Consider the following 330-residue polypeptide: Phosphate acyltransferase (330 aa).

The protein belongs to the PlsX family. In terms of assembly, homodimer. Probably interacts with PlsY.

Its subcellular location is the cytoplasm. The catalysed reaction is a fatty acyl-[ACP] + phosphate = an acyl phosphate + holo-[ACP]. It functions in the pathway lipid metabolism; phospholipid metabolism. In terms of biological role, catalyzes the reversible formation of acyl-phosphate (acyl-PO(4)) from acyl-[acyl-carrier-protein] (acyl-ACP). This enzyme utilizes acyl-ACP as fatty acyl donor, but not acyl-CoA. The polypeptide is Phosphate acyltransferase (Lactobacillus delbrueckii subsp. bulgaricus (strain ATCC 11842 / DSM 20081 / BCRC 10696 / JCM 1002 / NBRC 13953 / NCIMB 11778 / NCTC 12712 / WDCM 00102 / Lb 14)).